A 29-amino-acid chain; its full sequence is Small toxic protein ZorP (29 aa).

The chain crosses the membrane as a helical span at residues 10 to 27; that stretch reads VLIAVLELLVALLRLIDL.

It localises to the membrane. Its function is as follows. Toxic component of a type I toxin-antitoxin (TA) system. Overexpression leads to cell stasis and a decrease in colony-forming units. Probably repressed by cognate small RNA orzP. Base pairing occurs between 18 bases in the 5' UTR of zorP mRNA and the 5' end of OrzP sRNA. The chain is Small toxic protein ZorP from Escherichia coli O157:H7.